The following is a 178-amino-acid chain: Cytochrome b6-f complex subunit 4 (178 aa).

Transmembrane regions (helical) follow at residues 36–56, 95–115, and 131–151; these read LSYI…GLAV, LLGV…PFLE, and TVSL…ALPI.

The protein belongs to the cytochrome b family. PetD subfamily. The 4 large subunits of the cytochrome b6-f complex are cytochrome b6, subunit IV (17 kDa polypeptide, petD), cytochrome f and the Rieske protein, while the 4 small subunits are petG, petL, petM and petN. The complex functions as a dimer.

The protein resides in the plastid. It is found in the chloroplast thylakoid membrane. Component of the cytochrome b6-f complex, which mediates electron transfer between photosystem II (PSII) and photosystem I (PSI), cyclic electron flow around PSI, and state transitions. The protein is Cytochrome b6-f complex subunit 4 of Picea abies (Norway spruce).